Here is an 81-residue protein sequence, read N- to C-terminus: Thrombin-like enzyme collinein-3 (81 aa).

Asp4 is an active-site residue. Cysteines 51 and 68 form a disulfide.

As to quaternary structure, monomer. In terms of tissue distribution, expressed by the vanom gland.

Its subcellular location is the secreted. Its function is as follows. Thrombin-like snake venom serine protease. The chain is Thrombin-like enzyme collinein-3 from Crotalus durissus collilineatus (Brazilian rattlesnake).